The primary structure comprises 346 residues: Selenide, water dikinase (346 aa).

The active site involves Sec17. Sec17 is a non-standard amino acid (selenocysteine). Residues Lys20 and 47–49 contribute to the ATP site; that span reads TSD. Asp50 is a Mg(2+) binding site. Residues Asp67, Asp90, and 138 to 140 contribute to the ATP site; that span reads GHT. Asp90 contacts Mg(2+). Position 226 (Asp226) interacts with Mg(2+).

The protein belongs to the selenophosphate synthase 1 family. Class I subfamily. Homodimer. It depends on Mg(2+) as a cofactor.

It catalyses the reaction hydrogenselenide + ATP + H2O = selenophosphate + AMP + phosphate + 2 H(+). Functionally, synthesizes selenophosphate from selenide and ATP. The chain is Selenide, water dikinase from Trichlorobacter lovleyi (strain ATCC BAA-1151 / DSM 17278 / SZ) (Geobacter lovleyi).